The primary structure comprises 257 residues: High affinity immunoglobulin epsilon receptor subunit alpha (257 aa).

The N-terminal stretch at 1 to 25 (MAPAMESPTLLCVALLFFAPDGVLA) is a signal peptide. Over 26 to 205 (VPQKPKVSLN…KAPREKYWLQ (180 aa)) the chain is Extracellular. 2 Ig-like domains span residues 30-110 (PKVS…EVFS) and 111-193 (DWLL…LNIT). N-linked (GlcNAc...) asparagine glycosylation is found at Asn46, Asn67, Asn75, Asn99, Asn160, Asn165, and Asn191. Cys51 and Cys93 are disulfide-bonded. Residues Cys132 and Cys176 are joined by a disulfide bond. The helical transmembrane segment at 206-224 (FFIPLLVVILFAVDTGLFI) threads the bilayer. At 225 to 257 (STQQQVTFLLKIKRTRKGFRLLNPHPKPNPKNN) the chain is on the cytoplasmic side.

As to quaternary structure, tetramer of an alpha chain, a beta chain, and two disulfide linked gamma chains. Interacts with IGHE (via CH3 region). As to expression, expressed in eosinophils.

It is found in the cell membrane. Functionally, high-affinity receptor for immunoglobulin epsilon/IgE. Mediates IgE effector functions in myeloid cells. Upon IgE binding and antigen/allergen cross-linking initiates signaling pathways that lead to myeloid cell activation and differentiation. On mast cells, basophils and eosinophils stimulates the secretion of vasoactive amines, lipid mediators and cytokines that contribute to inflammatory response, tissue remodeling and cytotoxicity against microbes. Triggers the immediate hypersensitivity response to allergens as a host defense mechanism against helminth parasites, pathogenic bacteria and venom toxicity. When dysregulated, it can elicit harmful life-threatening allergic and anaphylactic reactions. The sequence is that of High affinity immunoglobulin epsilon receptor subunit alpha (FCER1A) from Homo sapiens (Human).